A 701-amino-acid chain; its full sequence is Arachidonate 12-lipoxygenase, 12R-type (701 aa).

One can recognise a PLAT domain in the interval 2–119 (ATYKVKVATG…TLSLREATGK (118 aa)). One can recognise a Lipoxygenase domain in the interval 120 to 701 (TTADDTLPIL…PVLIENSISI (582 aa)). Histidine 398, histidine 403, histidine 578, asparagine 582, and isoleucine 701 together coordinate Fe cation.

The protein belongs to the lipoxygenase family. Fe cation serves as cofactor.

Its subcellular location is the cytoplasm. The protein resides in the perinuclear region. The enzyme catalyses (5Z,8Z,11Z,14Z)-eicosatetraenoate + O2 = (12R)-hydroperoxy-(5Z,8Z,10E,14Z)-eicosatetraenoate. The catalysed reaction is N-[omega-(9Z,12Z)-octadecadienoyloxy]acyl-beta-D-glucosyl-(1&lt;-&gt;1)-octadecasphing-4E-enine + O2 = N-[omega-(9R)-hydroperoxy-(10E,12Z)-octadecadienoyloxy]acyl-beta-D-glucosyl-(1&lt;-&gt;1)-octadecasphing-4E-enine. It carries out the reaction a N-[omega-(9Z,12Z)-octadecadienoyloxy]-acylsphin-4E-enine + O2 = a N-[omega-(9R)-hydroperoxy-(10E,12Z)-octadecadienoyloxy]-acylsphin-4E-enine. It catalyses the reaction (6Z,9Z,12Z)-octadecatrienoate + O2 = 10-hydroperoxy-(6Z,8E,12Z)-octadecatrienoate. The enzyme catalyses (4Z,7Z,10Z,13Z,16Z,19Z)-docosahexaenoate + O2 = 14-hydroperoxy-(4Z,7Z,10Z,12E,16Z,19Z)-docosahexaenoate. The catalysed reaction is (8Z,11Z,14Z)-eicosatrienoate + O2 = (8Z,10E,14Z)-12-hydroperoxyeicosatrienoate. It carries out the reaction (5Z,8Z,11Z,14Z,17Z)-eicosapentaenoate + O2 = (5Z,7Z,8Z,10E,14Z,17Z)-12-hydroperoxyeicosapentaenoate. It catalyses the reaction (6Z,9Z,12Z)-octadecatrienoate + O2 = 10R-hydroperoxy-(6Z,8E,12Z)-octadecatrienoate. The enzyme catalyses 1-O-methyl-(5Z,8Z,11Z,14Z)-eicosatetraenoate + O2 = 1-O-methyl (5Z,8Z,10E,12R,14Z)-hydroperoxyiecosatetraenoate. The catalysed reaction is 1-O-methyl-(5Z,8Z,11Z,14Z)-eicosatetraenoate + O2 = 1-O-methyl-8-hydroperoxy-(5Z,9E,11Z,14Z)-eicosatetraenoate. It carries out the reaction 1-O-methyl-(5Z,8Z,11Z,14Z)-eicosatetraenoate + O2 = 1-O-methyl-(8R)-hydroperoxy-(5Z,9E,11Z,14Z)-eicosatrienoate. It catalyses the reaction 1-O-methyl-(9Z,12Z)-octadecadienoate + O2 = 1-O-methyl-(9R)-hydroperoxy-(10E,12Z)-octadecadienoate. The enzyme catalyses 1-O-methyl-20-hydroxy-(5Z,8Z,11Z,14Z)-eicosatetraenoate + O2 = 1-O-methyl-8-hydroperoxy-20-hydroxy-(5Z,9E,11Z,14Z)-eicosatetraenoate. The catalysed reaction is 1-O-methyl-20-hydroxy-(5Z,8Z,11Z,14Z)-eicosatetraenoate + O2 = 1-O-methyl-12-hydroperoxy-20-hydroxy-(5Z,8Z,10E,14Z)-eicosatetraenoate. It carries out the reaction 1-O-methyl-20-hydroxy-(5Z,8Z,11Z,14Z)-eicosatetraenoate + O2 = 1-O-methyl-9-hydroperoxy-20-hydroxy-(5Z,7E,11Z,14Z)-eicosatetraenoate. It catalyses the reaction 1-O-methyl-(9Z,12Z)-octadecadienoate + O2 = 1-O-methyl-(13S)-hydroperoxy-(9Z,11E)-octadecadienoate. It functions in the pathway lipid metabolism; hydroperoxy eicosatetraenoic acid biosynthesis. Its pathway is lipid metabolism; sphingolipid metabolism. With respect to regulation, increased by calcium. Its function is as follows. Catalyzes the regio and stereo-specific incorporation of a single molecule of dioxygen into free and esterified polyunsaturated fatty acids generating lipid hydroperoxides that can be further reduced to the corresponding hydroxy species. In the skin, acts upstream of ALOXE3 on the lineolate moiety of esterified omega-hydroxyacyl-sphingosine (EOS) ceramides to produce an epoxy-ketone derivative, a crucial step in the conjugation of omega-hydroxyceramide to membrane proteins. Therefore plays a crucial role in the synthesis of corneocytes lipid envelope and the establishment of the skin barrier to water loss. May also play a role in the regulation of the expression of airway mucins. The chain is Arachidonate 12-lipoxygenase, 12R-type from Rattus norvegicus (Rat).